The following is a 447-amino-acid chain: Putative vacuolar cation/proton exchanger 4 (447 aa).

Residues 1–29 form a disordered region; that stretch reads MDKSEMDKINGTNPESTDQAPSLASRPDE. The Cytoplasmic segment spans residues 1 to 65; sequence MDKSEMDKIN…VNWGVFGSMK (65 aa). Polar residues predominate over residues 10-22; the sequence is NGTNPESTDQAPS. A helical transmembrane segment spans residues 66–86; the sequence is IVFLKSKLNVLIPCGFLAIFL. The Extracellular segment spans residues 87-93; the sequence is NYMTQRY. The chain crosses the membrane as a helical span at residues 94 to 114; sequence GWVFPLSMLGIIPLAERLGFA. Topologically, residues 115–122 are cytoplasmic; sequence TDWQISCE. The helical transmembrane segment at 123–143 threads the bilayer; it reads VGRLLNSAFGNATELIISIHA. The interval 132–167 is cation selection; sequence GNATELIISIHALSRGKLHVVQQCLLGSILSNLLLV. Residues 144–159 are Extracellular-facing; sequence LSRGKLHVVQQCLLGS. The helical transmembrane segment at 160–180 threads the bilayer; sequence ILSNLLLVLGSAFFSGGLACG. At 181 to 190 the chain is on the cytoplasmic side; that stretch reads KTMQTFSKAD. The helical transmembrane segment at 191 to 211 threads the bilayer; that stretch reads AVVNSGLLLMAVMGLLIPAAL. The Extracellular segment spans residues 212 to 224; the sequence is HYTHSEAQFGKSE. The helical transmembrane segment at 225–245 threads the bilayer; it reads LALSRFSSCIMLVAYASYLYF. Topologically, residues 246–286 are cytoplasmic; sequence QLSNNRRRNEANVYPCMPLIKRRIQDDVDGNDDEVPEISKR. A helical transmembrane segment spans residues 287-307; sequence EAISWIAIFIAWISMLSYYLV. The Extracellular segment spans residues 308–318; the sequence is DAIDGASKAWN. The helical transmembrane segment at 319–339 threads the bilayer; sequence IPVAFISVVLLPVVGNSAGHA. The segment at 333-368 is cation selection; the sequence is GNSAGHANAVMFAVKDKLDISLGVAIGSSIQISMFG. Residues 340-353 lie on the Cytoplasmic side of the membrane; the sequence is NAVMFAVKDKLDIS. Residues 354 to 374 traverse the membrane as a helical segment; sequence LGVAIGSSIQISMFGIPFCVV. The Extracellular portion of the chain corresponds to 375–384; it reads MGWMMGKPMD. A helical membrane pass occupies residues 385–405; the sequence is LNFHLFETASLLTTVLVVAFL. At 406-413 the chain is on the cytoplasmic side; that stretch reads LQDGTSNC. A helical membrane pass occupies residues 414-434; it reads VKGLMLFLCYLIVAASFYVHA. Residues 435–447 lie on the Extracellular side of the membrane; it reads DPNSKASEKPPQN.

Belongs to the Ca(2+):cation antiporter (CaCA) (TC 2.A.19) family. Cation/proton exchanger (CAX) subfamily.

It localises to the vacuole membrane. In terms of biological role, vacuolar cation/proton exchanger (CAX). Translocates Ca(2+) and other metal ions into vacuoles using the proton gradient formed by H(+)-ATPase and H(+)-pyrophosphatase. The sequence is that of Putative vacuolar cation/proton exchanger 4 from Oryza sativa subsp. japonica (Rice).